The following is a 341-amino-acid chain: Anthranilate phosphoribosyltransferase (341 aa).

5-phospho-alpha-D-ribose 1-diphosphate is bound by residues Gly79, 82–83 (GD), Thr87, 89–92 (NIST), 107–115 (KHGNRAVSS), and Ser119. Gly79 contacts anthranilate. Position 91 (Ser91) interacts with Mg(2+). Asn110 serves as a coordination point for anthranilate. Arg165 lines the anthranilate pocket. 2 residues coordinate Mg(2+): Asp224 and Glu225.

It belongs to the anthranilate phosphoribosyltransferase family. As to quaternary structure, homodimer. The cofactor is Mg(2+).

It carries out the reaction N-(5-phospho-beta-D-ribosyl)anthranilate + diphosphate = 5-phospho-alpha-D-ribose 1-diphosphate + anthranilate. The protein operates within amino-acid biosynthesis; L-tryptophan biosynthesis; L-tryptophan from chorismate: step 2/5. Catalyzes the transfer of the phosphoribosyl group of 5-phosphorylribose-1-pyrophosphate (PRPP) to anthranilate to yield N-(5'-phosphoribosyl)-anthranilate (PRA). The sequence is that of Anthranilate phosphoribosyltransferase from Bacillus cereus (strain B4264).